Consider the following 273-residue polypeptide: HLA class II histocompatibility antigen, DO beta chain (273 aa).

The first 26 residues, 1 to 26 (MGSGWVPWVVALLVNLTRLDSSMTQG), serve as a signal peptide directing secretion. Positions 27 to 120 (TDSPEDFVIQ…LGAPFTVGRK (94 aa)) are beta-1. The Extracellular portion of the chain corresponds to 27–224 (TDSPEDFVIQ…RAQSEYSWRK (198 aa)). Cystine bridges form between Cys41–Cys105 and Cys143–Cys199. Residue Asn45 is glycosylated (N-linked (GlcNAc...) asparagine). The segment at 121–214 (VQPEVTVYPE…SLLSPVSVEW (94 aa)) is beta-2. Residues 123–213 (PEVTVYPERT…SSLLSPVSVE (91 aa)) enclose the Ig-like C1-type domain. The connecting peptide stretch occupies residues 215–224 (RAQSEYSWRK). The chain crosses the membrane as a helical span at residues 225 to 245 (MLSGIAAFLLGLIFLLVGIVI). Residues 246 to 273 (QLRAQKGYVRTQMSGNEVSRAVLLPQSC) are Cytoplasmic-facing.

This sequence belongs to the MHC class II family. As to quaternary structure, heterodimer of an alpha chain (DOA) and a beta chain (DOB). Forms a heterotetrameric complex with an HLA-DM molecule during intracellular transport in endosomal/lysosomal compartments in B-cells.

It localises to the endosome membrane. The protein resides in the lysosome membrane. Important modulator in the HLA class II restricted antigen presentation pathway by interaction with the HLA-DM molecule in B-cells. Modifies peptide exchange activity of HLA-DM. In Homo sapiens (Human), this protein is HLA class II histocompatibility antigen, DO beta chain (HLA-DOB).